A 459-amino-acid chain; its full sequence is Cysteine--tRNA ligase (459 aa).

A Zn(2+)-binding site is contributed by C31. The short motif at 33–43 is the 'HIGH' region element; the sequence is PTVYYNPHIGN. Zn(2+) contacts are provided by C216, H241, and E245. Residues 274 to 278 carry the 'KMSKS' region motif; that stretch reads KMSKS. K277 provides a ligand contact to ATP.

The protein belongs to the class-I aminoacyl-tRNA synthetase family. Monomer. It depends on Zn(2+) as a cofactor.

It localises to the cytoplasm. It carries out the reaction tRNA(Cys) + L-cysteine + ATP = L-cysteinyl-tRNA(Cys) + AMP + diphosphate. This Rickettsia africae (strain ESF-5) protein is Cysteine--tRNA ligase.